A 415-amino-acid chain; its full sequence is ATP-dependent Clp protease ATP-binding subunit ClpX (415 aa).

Residues 1 to 52 form the ClpX-type ZB domain; sequence MAESKNNKKRCSFCGRSENEVGFLITGMNGYICDSCATQAYEITQEAMGAGK. Zn(2+)-binding residues include Cys11, Cys14, Cys33, and Cys36. 121-128 is a binding site for ATP; that stretch reads STGTGKTL.

This sequence belongs to the ClpX chaperone family. In terms of assembly, component of the ClpX-ClpP complex. Forms a hexameric ring that, in the presence of ATP, binds to fourteen ClpP subunits assembled into a disk-like structure with a central cavity, resembling the structure of eukaryotic proteasomes.

In terms of biological role, ATP-dependent specificity component of the Clp protease. It directs the protease to specific substrates. Can perform chaperone functions in the absence of ClpP. In Bacteroides fragilis (strain ATCC 25285 / DSM 2151 / CCUG 4856 / JCM 11019 / LMG 10263 / NCTC 9343 / Onslow / VPI 2553 / EN-2), this protein is ATP-dependent Clp protease ATP-binding subunit ClpX.